Reading from the N-terminus, the 434-residue chain is Beta-enolase (434 aa).

A2 carries the N-acetylalanine modification. A Phosphothreonine modification is found at T72. Phosphoserine is present on residues S83 and S157. Residues H158 and E167 each coordinate substrate. Residue S176 is modified to Phosphoserine. T205 carries the post-translational modification Phosphothreonine. E210 acts as the Proton donor in catalysis. A Phosphothreonine modification is found at T229. Y236 carries the phosphotyrosine modification. Residue D245 coordinates Mg(2+). Position 263 is a phosphoserine (S263). Substrate-binding residues include E293 and D318. Mg(2+) contacts are provided by E293 and D318. K343 (proton acceptor) is an active-site residue. Substrate is bound by residues 370–373 (SHRS) and K394.

It belongs to the enolase family. In terms of assembly, mammalian enolase is composed of 3 isozyme subunits, alpha, beta and gamma, which can form homodimers or heterodimers which are cell-type and development-specific. In vitro, interacts with several glycolytic enzymes including PKM, PGM, CKM and ALDO. Also binds PLG and troponin, in vitro. Interacts with PNKD. The cofactor is Mg(2+). As to expression, brain (at protein level). The alpha/alpha homodimer is expressed in embryo and in most adult tissues. The alpha/beta heterodimer and the beta/beta homodimer are found in striated muscle, and the alpha/gamma heterodimer and the gamma/gamma homodimer in neurons. In striated muscle, the fiber-type order of ENO3 expression is IIB &gt; IIX &gt; IIA &gt; I.

The protein localises to the cytoplasm. It catalyses the reaction (2R)-2-phosphoglycerate = phosphoenolpyruvate + H2O. The protein operates within carbohydrate degradation; glycolysis; pyruvate from D-glyceraldehyde 3-phosphate: step 4/5. In terms of biological role, glycolytic enzyme that catalyzes the conversion of 2-phosphoglycerate to phosphoenolpyruvate. Appears to have a function in striated muscle development and regeneration. The sequence is that of Beta-enolase (Eno3) from Mus musculus (Mouse).